The primary structure comprises 105 residues: Large ribosomal subunit protein eL30 (105 aa).

This sequence belongs to the eukaryotic ribosomal protein eL30 family.

The chain is Large ribosomal subunit protein eL30 (RPL30) from Candida glabrata (strain ATCC 2001 / BCRC 20586 / JCM 3761 / NBRC 0622 / NRRL Y-65 / CBS 138) (Yeast).